A 68-amino-acid chain; its full sequence is Agnoprotein (68 aa).

At 1–24 (MVLRQLSRQASVKVGKTWTGTKRR) the chain is on the cytoplasmic side. Phosphoserine; by host occurs at positions 7 and 11. T21 carries the post-translational modification Phosphothreonine; by host. Residues 25 to 41 (AQRIFIFILELLLDFCR) form a helical; Signal-anchor for type II membrane protein membrane-spanning segment. Over 42–68 (GEDSVDGKKKKDSLTDKTETVTEKKES) the chain is Extracellular. A disordered region spans residues 44-68 (DSVDGKKKKDSLTDKTETVTEKKES).

The protein belongs to the polyomavirus agnoprotein family. As to quaternary structure, homooligomer. Interacts with VP1. Interacts with large T antigen; this interaction may impact upon the activity of T-antigen on the control of viral gene transcription and replication. Interacts with small t antigen. Interacts with host CBX5; this interaction induces the dissociation of CBX5 from LBR, resulting in destabilization of the nuclear envelope. Phosphorylated by host PKC. Phosphorylation alters the stability and may also have an impact on the subcellular location.

The protein resides in the host cytoplasm. The protein localises to the host nucleus membrane. It is found in the host rough endoplasmic reticulum membrane. Its subcellular location is the host cell membrane. In terms of biological role, alters the structure of the nuclear envelope by interacting with host CBX5 and disrupting CBX5 association with LBR. Involved in the perinuclear-nuclear localization of the capsid protein VP1 during virion assembly and maturation. Plays an important role in the release of progeny virions from infected cells and in viral propagation, probably by acting as a viral ionic channel in the host plasma membrane. Allows influx of extracellular calcium ions in the host cell. May contribute to viral genome transcription and translation of viral late proteins. The chain is Agnoprotein from Simian virus 12 (strain wt100) (SV-12).